Reading from the N-terminus, the 313-residue chain is Biotin synthase (313 aa).

The region spanning 28 to 258 (NFGNDIELCS…LFPQARLRLS (231 aa)) is the Radical SAM core domain. C46, C50, and C53 together coordinate [4Fe-4S] cluster. The [2Fe-2S] cluster site is built by C90, C121, C181, and R256.

The protein belongs to the radical SAM superfamily. Biotin synthase family. Homodimer. Requires [4Fe-4S] cluster as cofactor. [2Fe-2S] cluster serves as cofactor.

It carries out the reaction (4R,5S)-dethiobiotin + (sulfur carrier)-SH + 2 reduced [2Fe-2S]-[ferredoxin] + 2 S-adenosyl-L-methionine = (sulfur carrier)-H + biotin + 2 5'-deoxyadenosine + 2 L-methionine + 2 oxidized [2Fe-2S]-[ferredoxin]. The protein operates within cofactor biosynthesis; biotin biosynthesis; biotin from 7,8-diaminononanoate: step 2/2. Functionally, catalyzes the conversion of dethiobiotin (DTB) to biotin by the insertion of a sulfur atom into dethiobiotin via a radical-based mechanism. In Francisella tularensis subsp. tularensis (strain FSC 198), this protein is Biotin synthase.